Here is a 202-residue protein sequence, read N- to C-terminus: Peptide methionine sulfoxide reductase A3 (202 aa).

The tract at residues 1-34 (MNILNRLGLGSSGQTNMDPSPIAQGNDDDTPAPG) is disordered. Ser189 carries the phosphoserine modification.

It belongs to the MsrA Met sulfoxide reductase family. In terms of tissue distribution, expressed in rosette and cauline leaves, and at lower levels in roots, stems and flowers (at protein level).

It localises to the cytoplasm. The protein resides in the cytosol. It carries out the reaction L-methionyl-[protein] + [thioredoxin]-disulfide + H2O = L-methionyl-(S)-S-oxide-[protein] + [thioredoxin]-dithiol. The catalysed reaction is [thioredoxin]-disulfide + L-methionine + H2O = L-methionine (S)-S-oxide + [thioredoxin]-dithiol. Functionally, catalyzes the reduction of methionine sulfoxide (MetSO) to methionine in proteins. Plays a protective role against oxidative stress by restoring activity to proteins that have been inactivated by methionine oxidation. May prevent cellular oxidative damage due to light exposure. MSRA family specifically reduces the MetSO S-enantiomer. In Arabidopsis thaliana (Mouse-ear cress), this protein is Peptide methionine sulfoxide reductase A3 (MSRA3).